Reading from the N-terminus, the 227-residue chain is Hydroxylase/desaturase asaB (227 aa).

This sequence belongs to the asaB hydroxylase/desaturase family.

The protein operates within secondary metabolite biosynthesis. Functionally, hydroxylase/desaturase; part of the gene cluster that mediates the biosynthesis of aspergillic acid, a hydroxamic acid-containing pyrazinone with aliphatic side chains that originates from leucine (Leu) and isoleucine (Ile). Aspergillic acid has antibiotic properties and was shown to be lethal to mice. The first step in the pathway is the production of deoxyaspergillic acid via a condensation between the Ile amine and the Leu carboxylic acid, followed by a reductive release from the protein forming the dipeptide aldehyde NH(2)-Leu-Ile-CHO, which could undergo an intermolecular cyclization resulting in a dihydropyrazinone. As the NRPS asaC lacks a condensation domain, it is improbable that it is responsible for condensation of Leu and Ile. One possibility is that asaC acts on a previously condensed dipeptide and functions as a Leu-Ile reductase to yield deoxyaspergillic acid. After asaC forms deoxyaspergillic acid, the cytochrome P450 asaD oxidizes the pyrazinone to the hydroxamic acid-containing bioactive metabolite aspergillic acid. The hydroxylase/desaturase asaB can then convert aspergillic acid to hydroxyaspergillic acid. Both aspergillic acid and hydroxyaspergillic acid can form complexes with iron producing ferriaspergillin analogs. The polypeptide is Hydroxylase/desaturase asaB (Aspergillus flavus (strain ATCC 200026 / FGSC A1120 / IAM 13836 / NRRL 3357 / JCM 12722 / SRRC 167)).